Reading from the N-terminus, the 833-residue chain is Leucine--tRNA ligase (833 aa).

Positions 41 to 52 (PYPSGAGLHVGH) match the 'HIGH' region motif. Positions 610 to 614 (KMSKS) match the 'KMSKS' region motif. Position 613 (lysine 613) interacts with ATP.

This sequence belongs to the class-I aminoacyl-tRNA synthetase family.

The protein localises to the cytoplasm. The catalysed reaction is tRNA(Leu) + L-leucine + ATP = L-leucyl-tRNA(Leu) + AMP + diphosphate. This Streptococcus equi subsp. equi (strain 4047) protein is Leucine--tRNA ligase.